The following is a 523-amino-acid chain: GMP synthase [glutamine-hydrolyzing] (523 aa).

A Glutamine amidotransferase type-1 domain is found at 18-208 (KILIVDFGGQ…LYNVCGAKGD (191 aa)). C95 acts as the Nucleophile in catalysis. Active-site residues include H182 and E184. One can recognise a GMPS ATP-PPase domain in the interval 209-398 (WNMKSFLAEA…LGLPDYLVHR (190 aa)). 236–242 (SGGVDSS) is an ATP binding site.

Homodimer.

The enzyme catalyses XMP + L-glutamine + ATP + H2O = GMP + L-glutamate + AMP + diphosphate + 2 H(+). The protein operates within purine metabolism; GMP biosynthesis; GMP from XMP (L-Gln route): step 1/1. Catalyzes the synthesis of GMP from XMP. The polypeptide is GMP synthase [glutamine-hydrolyzing] (Treponema denticola (strain ATCC 35405 / DSM 14222 / CIP 103919 / JCM 8153 / KCTC 15104)).